The chain runs to 297 residues: MPLPADPSPTLSAYAHPERLVTADWLSAHMGAPGLAIVESDEDVLLYDVGHIPGAVKIDWHTDLNDPRVRDYINGEQFAELMDRKGIARDDTVVIYGDKSNWWAAYALWVFTLFGHADVRLLNGGRDLWLAERRETTLDVPTKTCTGYPVVQRNDAPIRAFRDDVLAILGAQPLIDVRSPEEYTGKRTHMPDYPEEGALRAGHIPTAVHIPWGKAADESGRFRSREELERLYDFINPDDQTVVYCRIGERSSHTWFVLTHLLGKADVRNYDGSWTEWGNAVRVPIVAGEEPGVVPVV.

Rhodanese domains are found at residues 31–138 (GAPG…ETTL) and 168–286 (ILGA…VPIV). Catalysis depends on cysteine 245, which acts as the Cysteine persulfide intermediate. Arginine 250 contributes to the substrate binding site.

It catalyses the reaction thiosulfate + hydrogen cyanide = thiocyanate + sulfite + 2 H(+). The sequence is that of Putative thiosulfate sulfurtransferase SseA (sseA) from Mycobacterium tuberculosis (strain CDC 1551 / Oshkosh).